The following is a 67-amino-acid chain: Small ribosomal subunit protein eS17 (67 aa).

It belongs to the eukaryotic ribosomal protein eS17 family.

In Haloquadratum walsbyi (strain DSM 16790 / HBSQ001), this protein is Small ribosomal subunit protein eS17.